A 115-amino-acid polypeptide reads, in one-letter code: U3-lycotoxin-Ls1a (115 aa).

A signal peptide spans Met1–Ala20. Residues Glu21–Arg44 constitute a propeptide that is removed on maturation. Cystine bridges form between Cys48-Cys63, Cys55-Cys72, Cys62-Cys87, and Cys74-Cys85.

The protein belongs to the neurotoxin 19 (CSTX) family. 01 subfamily. As to expression, expressed by the venom gland.

The protein localises to the secreted. This chain is U3-lycotoxin-Ls1a, found in Lycosa singoriensis (Wolf spider).